The sequence spans 100 residues: MIREERLLKVLRAPHISEKATMSAEKSNTIVFKVAKDATKKEIKAAVEKLFEVEVKSVNTLIIKGKTKRQGLRQGRRSDVKKAYVTLNEGQDLDFVGGAE.

The protein belongs to the universal ribosomal protein uL23 family. In terms of assembly, part of the 50S ribosomal subunit. Contacts protein L29, and trigger factor when it is bound to the ribosome.

In terms of biological role, one of the early assembly proteins it binds 23S rRNA. One of the proteins that surrounds the polypeptide exit tunnel on the outside of the ribosome. Forms the main docking site for trigger factor binding to the ribosome. In Vibrio cholerae serotype O1 (strain ATCC 39541 / Classical Ogawa 395 / O395), this protein is Large ribosomal subunit protein uL23.